We begin with the raw amino-acid sequence, 155 residues long: MSETEPTVYAYTDGACRGNPGPGGWGVLLRYGSKTREIYGGERETTNNRMELMAAIRALETLSRPCKVKIVTDSQYVKKGITEWVAQWEKRGWKTAGRSPVKNIDLWQRLIQAEQRHQVSWGWIKGHSGHPENEAADRLANRGIDELLQSDKIPA.

In terms of domain architecture, RNase H type-1 spans 4 to 145; that stretch reads TEPTVYAYTD…ADRLANRGID (142 aa). Mg(2+) contacts are provided by aspartate 13, glutamate 51, aspartate 73, and aspartate 137.

The protein belongs to the RNase H family. In terms of assembly, monomer. Mg(2+) serves as cofactor.

The protein localises to the cytoplasm. It catalyses the reaction Endonucleolytic cleavage to 5'-phosphomonoester.. Its function is as follows. Endonuclease that specifically degrades the RNA of RNA-DNA hybrids. The chain is Ribonuclease H from Methylococcus capsulatus (strain ATCC 33009 / NCIMB 11132 / Bath).